Here is a 214-residue protein sequence, read N- to C-terminus: Adenylate kinase (214 aa).

10–15 contacts ATP; the sequence is GAGKGT. The interval 30-59 is NMP; the sequence is STGDMLRAAVKAGTELGKQAKEIMDAGKLV. Residues Thr-31, Arg-36, 57 to 59, 85 to 88, and Gln-92 contribute to the AMP site; these read KLV and GFPR. The segment at 122-159 is LID; the sequence is GRRVHAASGRVYHVKFNPPKVEDKDDVTGEDLSVRKDD. ATP-binding positions include Arg-123 and 132–133; that span reads VY. AMP contacts are provided by Arg-156 and Arg-167. Arg-200 serves as a coordination point for ATP.

It belongs to the adenylate kinase family. In terms of assembly, monomer.

It localises to the cytoplasm. It carries out the reaction AMP + ATP = 2 ADP. It participates in purine metabolism; AMP biosynthesis via salvage pathway; AMP from ADP: step 1/1. Functionally, catalyzes the reversible transfer of the terminal phosphate group between ATP and AMP. Plays an important role in cellular energy homeostasis and in adenine nucleotide metabolism. This is Adenylate kinase from Pectobacterium atrosepticum (strain SCRI 1043 / ATCC BAA-672) (Erwinia carotovora subsp. atroseptica).